A 365-amino-acid polypeptide reads, in one-letter code: Membrane-bound lytic murein transglycosylase C (365 aa).

Positions 1-19 (MKKYTKYLPLLLIIPFLAA) are cleaved as a signal peptide. The N-palmitoyl cysteine moiety is linked to residue cysteine 20. Cysteine 20 is lipidated: S-diacylglycerol cysteine.

This sequence belongs to the transglycosylase Slt family.

The protein localises to the cell outer membrane. The enzyme catalyses Exolytic cleavage of the (1-&gt;4)-beta-glycosidic linkage between N-acetylmuramic acid (MurNAc) and N-acetylglucosamine (GlcNAc) residues in peptidoglycan, from either the reducing or the non-reducing ends of the peptidoglycan chains, with concomitant formation of a 1,6-anhydrobond in the MurNAc residue.. Murein-degrading enzyme. May play a role in recycling of muropeptides during cell elongation and/or cell division. The protein is Membrane-bound lytic murein transglycosylase C of Actinobacillus pleuropneumoniae serotype 5b (strain L20).